The chain runs to 356 residues: Isocitrate dehydrogenase [NAD] subunit 1, mitochondrial (356 aa).

The substrate site is built by R106, R137, and D224. D224 contributes to the Mg(2+) binding site.

This sequence belongs to the isocitrate and isopropylmalate dehydrogenases family. In terms of assembly, octamer of two non-identical subunits IDH1 and IDH2. Mg(2+) serves as cofactor. The cofactor is Mn(2+).

The protein resides in the mitochondrion. It catalyses the reaction D-threo-isocitrate + NAD(+) = 2-oxoglutarate + CO2 + NADH. Functionally, performs an essential role in the oxidative function of the citric acid cycle. Also binds RNA; specifically to the 5'-untranslated leaders of mitochondrial mRNAs. The protein is Isocitrate dehydrogenase [NAD] subunit 1, mitochondrial (idh1) of Schizosaccharomyces pombe (strain 972 / ATCC 24843) (Fission yeast).